We begin with the raw amino-acid sequence, 367 residues long: Glutamate 5-kinase 2 (367 aa).

Lysine 10 provides a ligand contact to ATP. Residues serine 50, aspartate 136, and asparagine 148 each coordinate substrate. ATP is bound by residues 168 to 169 and 210 to 216; these read TD and TGGMATK. The 79-residue stretch at 275 to 353 folds into the PUA domain; sequence SGQIVIDAGA…KQIGELLDYD (79 aa).

Belongs to the glutamate 5-kinase family.

The protein resides in the cytoplasm. It catalyses the reaction L-glutamate + ATP = L-glutamyl 5-phosphate + ADP. It participates in amino-acid biosynthesis; L-proline biosynthesis; L-glutamate 5-semialdehyde from L-glutamate: step 1/2. In terms of biological role, catalyzes the transfer of a phosphate group to glutamate to form L-glutamate 5-phosphate. In Pseudoalteromonas translucida (strain TAC 125), this protein is Glutamate 5-kinase 2.